Here is a 204-residue protein sequence, read N- to C-terminus: Large ribosomal subunit protein eL15 (204 aa).

The segment at 155-204 is disordered; that stretch reads VHKHREQRGLTSAGRKSRGLGKGWRFSATRGGSQAKNWKRKNTKVFHRKR. Residues 191-204 are compositionally biased toward basic residues; it reads NWKRKNTKVFHRKR.

The protein belongs to the eukaryotic ribosomal protein eL15 family.

The polypeptide is Large ribosomal subunit protein eL15 (rpl-15) (Caenorhabditis elegans).